The chain runs to 189 residues: Peptidyl-tRNA hydrolase (189 aa).

Tyr15 is a tRNA binding site. His20 (proton acceptor) is an active-site residue. Residues Tyr64, Asn66, and Asn112 each contribute to the tRNA site.

Belongs to the PTH family. Monomer.

The protein resides in the cytoplasm. It catalyses the reaction an N-acyl-L-alpha-aminoacyl-tRNA + H2O = an N-acyl-L-amino acid + a tRNA + H(+). Hydrolyzes ribosome-free peptidyl-tRNAs (with 1 or more amino acids incorporated), which drop off the ribosome during protein synthesis, or as a result of ribosome stalling. Functionally, catalyzes the release of premature peptidyl moieties from peptidyl-tRNA molecules trapped in stalled 50S ribosomal subunits, and thus maintains levels of free tRNAs and 50S ribosomes. The chain is Peptidyl-tRNA hydrolase from Sulfurihydrogenibium sp. (strain YO3AOP1).